Reading from the N-terminus, the 272-residue chain is Cytosolic Fe-S cluster assembly factor NUBP2 (272 aa).

23-30 lines the ATP pocket; sequence GKGGVGKS. [4Fe-4S] cluster contacts are provided by cysteine 197 and cysteine 200.

Belongs to the Mrp/NBP35 ATP-binding proteins family. NUBP2/CFD1 subfamily. In terms of assembly, heterotetramer of 2 NUBP1 and 2 NUBP2 chains. The cofactor is [4Fe-4S] cluster.

It is found in the cytoplasm. In terms of biological role, component of the cytosolic iron-sulfur (Fe/S) protein assembly (CIA) machinery. Required for maturation of extramitochondrial Fe-S proteins. The NUBP1-NUBP2 heterotetramer forms a Fe-S scaffold complex, mediating the de novo assembly of an Fe-S cluster and its transfer to target apoproteins. The protein is Cytosolic Fe-S cluster assembly factor NUBP2 of Gallus gallus (Chicken).